We begin with the raw amino-acid sequence, 168 residues long: tRNA-splicing endonuclease (168 aa).

Catalysis depends on residues Y107, H114, and K145.

This sequence belongs to the tRNA-intron endonuclease family. Archaeal short subfamily. As to quaternary structure, homotetramer; although the tetramer contains four active sites, only two participate in the cleavage. Therefore, it should be considered as a dimer of dimers.

The enzyme catalyses pretRNA = a 3'-half-tRNA molecule with a 5'-OH end + a 5'-half-tRNA molecule with a 2',3'-cyclic phosphate end + an intron with a 2',3'-cyclic phosphate and a 5'-hydroxyl terminus.. In terms of biological role, endonuclease that removes tRNA introns. Cleaves pre-tRNA at the 5'- and 3'-splice sites to release the intron. The products are an intron and two tRNA half-molecules bearing 2',3' cyclic phosphate and 5'-OH termini. Recognizes a pseudosymmetric substrate in which 2 bulged loops of 3 bases are separated by a stem of 4 bp. The chain is tRNA-splicing endonuclease from Thermococcus gammatolerans (strain DSM 15229 / JCM 11827 / EJ3).